A 562-amino-acid chain; its full sequence is MFS-type transporter calB (562 aa).

Polar residues predominate over residues 1-16; that stretch reads MDEVTRTAQRSPSITE. The interval 1-45 is disordered; the sequence is MDEVTRTAQRSPSITETHAGETKLAGPGEKEGDVESPVDPSADSE. Residues 57-77 form a helical membrane-spanning segment; the sequence is FAILASVTLSAFLMLLDGSII. N-linked (GlcNAc...) asparagine glycosylation occurs at asparagine 83. Helical transmembrane passes span 94–113, 123–143, 154–174, 184–204, 213–233, 256–276, 284–304, 329–349, 362–382, 389–409, 418–438, 451–471, and 530–550; these read IGWYTAAYQLASAALQPLSG, WTYLFFFGLFELGSLICGVAN, VAGLGSSGLLNGGMTIIAGAV, GIYLGISQLGIVCGPLIGGAL, CFYINLPVGAVTAILLLFLQV, LIGFTLFAPAAIMVLLALYYG, SSQVIGLFCGAGVTIIVFALW, INGAALVASILVAAQYLPIYF, VNTLPGILSQLLTVILSGVLV, LPFAAAGSAISAVGNGIVTLF, WIGYQIVLGSGRGIGMQMGII, VGIAFMIFCQNFAGAIFVVVG, and VFYLLMSLSLAGFVAAFGMGW. Residue asparagine 557 is glycosylated (N-linked (GlcNAc...) asparagine).

Belongs to the major facilitator superfamily. TCR/Tet family.

Its subcellular location is the cell membrane. Its function is as follows. MFS-type transporter; part of the gene cluster that mediates the biosynthesis of calbistrin A and related compounds. Calbistrin A is a secondary metabolite with an interesting structure that was recently found to have bioactivity against leukemia cells. It consists of two polyketides linked by an ester bond: a bicyclic decalin containing polyketide and a linear 12 carbon dioic acid structure. Required for the secretion of calbistrin A and calbistrin C, as well as of related compounds decumbenone A, B and C. The polypeptide is MFS-type transporter calB (Penicillium decumbens).